The primary structure comprises 145 residues: Maximins 3/H11 type 3 (145 aa).

Residues 1–18 (MNFKYIVAVSFLIASAYA) form the signal peptide. 2 consecutive propeptides follow at residues 19–43 (RSVQNDEQSLSQRDVLEEEESLREI) and 75–122 (TAEE…TKKE). At isoleucine 144 the chain carries Isoleucine amide.

It belongs to the bombinin family. In terms of tissue distribution, expressed by the skin glands.

It localises to the secreted. Functionally, maximin-3 shows antibacterial activity against both Gram-positive and Gram-negative bacteria. It also shows antimicrobial activity against the fungus C.albicans, but not against A.flavus nor P.uticale. It has little hemolytic activity. It possess a significant cytotoxicity against tumor cell lines. It possess a significant anti-HIV activity. It shows high spermicidal activity. Its function is as follows. Maximin-H11 shows antimicrobial activity against bacteria and against the fungus C.albicans. Shows strong hemolytic activity. The polypeptide is Maximins 3/H11 type 3 (Bombina maxima (Giant fire-bellied toad)).